Reading from the N-terminus, the 258-residue chain is UPF0246 protein YaaA (258 aa).

Belongs to the UPF0246 family.

In Escherichia coli O8 (strain IAI1), this protein is UPF0246 protein YaaA.